A 587-amino-acid polypeptide reads, in one-letter code: Tectonic-1 (587 aa).

Residues 1 to 22 (MRPRGLPPLLVVLLGCWASVSA) form the signal peptide. N-linked (GlcNAc...) asparagine glycosylation is present at Asn-36. The tract at residues 46–68 (GTFPSTRPPGTPRAPGPSSGPRP) is disordered. Residues 51–68 (TRPPGTPRAPGPSSGPRP) are compositionally biased toward pro residues. 2 N-linked (GlcNAc...) asparagine glycosylation sites follow: Asn-295 and Asn-528.

The protein belongs to the tectonic family. As to quaternary structure, part of the tectonic-like complex (also named B9 complex).

The protein localises to the cytoplasm. It localises to the cytoskeleton. The protein resides in the cilium basal body. Its subcellular location is the secreted. In terms of biological role, component of the tectonic-like complex, a complex localized at the transition zone of primary cilia and acting as a barrier that prevents diffusion of transmembrane proteins between the cilia and plasma membranes. Regulator of Hedgehog (Hh), required for both activation and inhibition of the Hh pathway in the patterning of the neural tube. During neural tube development, it is required for formation of the most ventral cell types and for full Hh pathway activation. Functions in Hh signal transduction to fully activate the pathway in the presence of high Hh levels and to repress the pathway in the absence of Hh signals. Modulates Hh signal transduction downstream of SMO and RAB23. The sequence is that of Tectonic-1 (TCTN1) from Homo sapiens (Human).